The following is a 56-amino-acid chain: Small ribosomal subunit protein uS14 (56 aa).

Positions 21, 24, 39, and 42 each coordinate Zn(2+).

This sequence belongs to the universal ribosomal protein uS14 family. As to quaternary structure, component of the 40S small ribosomal subunit. Zn(2+) serves as cofactor.

It is found in the cytoplasm. It localises to the cytosol. The protein localises to the rough endoplasmic reticulum. This Lonomia obliqua (Moth) protein is Small ribosomal subunit protein uS14 (RpS29).